A 367-amino-acid chain; its full sequence is 3-isopropylmalate dehydrogenase (367 aa).

NAD(+) is bound at residue 80–93 (GKEWTHLPADEQPE). Substrate contacts are provided by R101, R111, R140, and D230. Mg(2+)-binding residues include D230, D254, and D258. 288 to 300 (GSAPDLKGKNIAN) contacts NAD(+).

The protein belongs to the isocitrate and isopropylmalate dehydrogenases family. LeuB type 1 subfamily. In terms of assembly, homodimer. Mg(2+) is required as a cofactor. The cofactor is Mn(2+).

The protein localises to the cytoplasm. The catalysed reaction is (2R,3S)-3-isopropylmalate + NAD(+) = 4-methyl-2-oxopentanoate + CO2 + NADH. The protein operates within amino-acid biosynthesis; L-leucine biosynthesis; L-leucine from 3-methyl-2-oxobutanoate: step 3/4. Functionally, catalyzes the oxidation of 3-carboxy-2-hydroxy-4-methylpentanoate (3-isopropylmalate) to 3-carboxy-4-methyl-2-oxopentanoate. The product decarboxylates to 4-methyl-2 oxopentanoate. This chain is 3-isopropylmalate dehydrogenase (leuB), found in Buchnera aphidicola subsp. Cinara cedri (strain Cc).